Consider the following 338-residue polypeptide: Cytoskeleton protein RodZ (338 aa).

The Cytoplasmic portion of the chain corresponds to 1–111; that stretch reads MNTEATHEEN…LGKSRKKRDG (111 aa). The region spanning 19–71 is the HTH cro/C1-type domain; it reads LRLAREQLGLSQQVVAERLCLKVSTVRDIEEDKAPADLASTFLRGYIRSYARL. The H-T-H motif DNA-binding region spans 30 to 49; sequence QQVVAERLCLKVSTVRDIEE. The helical; Signal-anchor for type II membrane protein transmembrane segment at 112–132 threads the bilayer; sequence WLMSFTWLVLFVVVGLTGAWW. Residues 133–338 lie on the Periplasmic side of the membrane; sequence WQNHKAQQEE…TLNAEQSVTQ (206 aa). 2 stretches are compositionally biased toward polar residues: residues 147–180 and 189–214; these read ADQSSAELSQNAANSPQSVPLNTDNTADASQDQA and GDTQNTASNNPQPTPVPSSNTASQQP. The tract at residues 147-245 is disordered; it reads ADQSSAELSQ…AQSQLPVGQA (99 aa). The segment covering 220-239 has biased composition (low complexity); sequence SQANTDTAAQQNTTQPAQSQ.

Belongs to the RodZ family.

It localises to the cell inner membrane. Its function is as follows. Cytoskeletal protein that is involved in cell-shape control through regulation of the length of the long axis. In Cronobacter sakazakii (strain ATCC BAA-894) (Enterobacter sakazakii), this protein is Cytoskeleton protein RodZ.